We begin with the raw amino-acid sequence, 695 residues long: MAQLDTLDVVVLAVLLAGSIAYFTKGTFWAVAKDPYASSGPAMNGVAKAGKSRNIIEKMDETGKNCVIFYGSQTGTAEDYASRLAKEGSQRFGLKTMVADIEEYDYENLDQFPEDKVAFFVLATYGEGEPTDNAVEFYQFITGDDVSFEGGGSAEDKPLSSLKYVAFGLGNNTYEHYNAMVRQVDAALTKLGAQRIGSAGEGDDGAGTMEEDFLAWKEPMWAALSEAMNLQEREASYEPVFCVTEDESLTPEDNSVYLGEPTKGHLEGQPNGPYSAHNPYIAPIVESRELFTVKDRNCLHMEISIAGTNLTYQTGDHIAIWPTNAGAEVDRFLNVFGLEEKRHSVINIKGIDVTAKVPIPTPTTYDAAVRYYMEVCAPVSRQFVSTLAAFAPDEETKTEIVRLGSDKDYFHEKITNQCFNIAQALQSITSKPFSNVPFSLLIEGLNKIQPRYYSISSSSLVQKDKISITAVVESTRLPGATHIVKGVTTNYLLALKQKQNGDPSPDPHGQTYAINGPRNKYDGIHVPVHVRHSNFKLPSDPSRPIIMIGPGTGVAPFRGFIQERAALAARGEKVGPTVLFFGCRKRDEDFLYKDEWKVFQDQLGDSLKIITAFSRESEKKVYVQHRLKEHAELVSDLLKQKATFYVCGDAANMAREVNLVLGQIIAAQRGLPAEKGEEMVKHMRSSGSYQEDVWS.

Over 1-8 (MAQLDTLD) the chain is Lumenal. A helical transmembrane segment spans residues 9-31 (VVVLAVLLAGSIAYFTKGTFWAV). At 32 to 695 (AKDPYASSGP…SGSYQEDVWS (664 aa)) the chain is on the cytoplasmic side. Residues 66 to 221 (CVIFYGSQTG…DFLAWKEPMW (156 aa)) form the Flavodoxin-like domain. FMN is bound by residues 72 to 77 (SQTGTA), 123 to 126 (ATYG), 169 to 178 (LGNNTYEHYN), and aspartate 204. Residues 277–538 (HNPYIAPIVE…HVRHSNFKLP (262 aa)) enclose the FAD-binding FR-type domain. Arginine 296 lines the NADP(+) pocket. FAD is bound by residues 451–454 (RYYS), 469–471 (TAV), and 486–489 (GVTT). The disordered stretch occupies residues 497–516 (QKQNGDPSPDPHGQTYAING). NADP(+) is bound by residues threonine 552, 614 to 615 (SR), 620 to 624 (KVYVQ), and glutamate 656. Tryptophan 694 is a binding site for FAD.

Belongs to the NADPH--cytochrome P450 reductase family. The protein in the N-terminal section; belongs to the flavodoxin family. It in the C-terminal section; belongs to the flavoprotein pyridine nucleotide cytochrome reductase family. Requires FAD as cofactor. The cofactor is FMN.

Its subcellular location is the endoplasmic reticulum membrane. The protein resides in the mitochondrion outer membrane. It is found in the cell membrane. The catalysed reaction is 2 oxidized [cytochrome P450] + NADPH = 2 reduced [cytochrome P450] + NADP(+) + H(+). This enzyme is required for electron transfer from NADP to cytochrome P450 in microsomes. It can also provide electron transfer to heme oxygenase and cytochrome B5. Involved in ergosterol biosynthesis. This chain is NADPH--cytochrome P450 reductase, found in Emericella nidulans (strain FGSC A4 / ATCC 38163 / CBS 112.46 / NRRL 194 / M139) (Aspergillus nidulans).